The primary structure comprises 428 residues: Probable glucose-6-phosphate isomerase (428 aa).

The Proton donor role is filled by glutamate 269. Residues histidine 290 and lysine 401 contribute to the active site.

It belongs to the GPI family.

Its subcellular location is the cytoplasm. It carries out the reaction alpha-D-glucose 6-phosphate = beta-D-fructose 6-phosphate. It functions in the pathway carbohydrate biosynthesis; gluconeogenesis. The protein operates within carbohydrate degradation; glycolysis; D-glyceraldehyde 3-phosphate and glycerone phosphate from D-glucose: step 2/4. Functionally, catalyzes the reversible isomerization of glucose-6-phosphate to fructose-6-phosphate. The protein is Probable glucose-6-phosphate isomerase of Natronomonas pharaonis (strain ATCC 35678 / DSM 2160 / CIP 103997 / JCM 8858 / NBRC 14720 / NCIMB 2260 / Gabara) (Halobacterium pharaonis).